Here is a 240-residue protein sequence, read N- to C-terminus: Ubiquinone biosynthesis O-methyltransferase (240 aa).

Residues Arg44, Gly64, Asp85, and Met129 each coordinate S-adenosyl-L-methionine.

This sequence belongs to the methyltransferase superfamily. UbiG/COQ3 family.

The catalysed reaction is a 3-demethylubiquinol + S-adenosyl-L-methionine = a ubiquinol + S-adenosyl-L-homocysteine + H(+). It carries out the reaction a 3-(all-trans-polyprenyl)benzene-1,2-diol + S-adenosyl-L-methionine = a 2-methoxy-6-(all-trans-polyprenyl)phenol + S-adenosyl-L-homocysteine + H(+). Its pathway is cofactor biosynthesis; ubiquinone biosynthesis. Its function is as follows. O-methyltransferase that catalyzes the 2 O-methylation steps in the ubiquinone biosynthetic pathway. In Escherichia coli O6:K15:H31 (strain 536 / UPEC), this protein is Ubiquinone biosynthesis O-methyltransferase.